The sequence spans 315 residues: Ribosomal protein L11 methyltransferase (315 aa).

Residues threonine 164, glycine 185, aspartate 207, and asparagine 249 each coordinate S-adenosyl-L-methionine.

This sequence belongs to the methyltransferase superfamily. PrmA family.

The protein resides in the cytoplasm. It catalyses the reaction L-lysyl-[protein] + 3 S-adenosyl-L-methionine = N(6),N(6),N(6)-trimethyl-L-lysyl-[protein] + 3 S-adenosyl-L-homocysteine + 3 H(+). In terms of biological role, methylates ribosomal protein L11. This chain is Ribosomal protein L11 methyltransferase, found in Lactobacillus johnsonii (strain CNCM I-12250 / La1 / NCC 533).